The primary structure comprises 101 residues: uncharacterized protein (101 aa).

The first 17 residues, 1 to 17, serve as a signal peptide directing secretion; sequence MKKAAVLAVVLSLGLAG. Cysteine 18 carries the N-palmitoyl cysteine lipid modification. Residue cysteine 18 is the site of S-diacylglycerol cysteine attachment.

It is found in the cell membrane. This is an uncharacterized protein from Pasteurella multocida (strain Pm70).